The chain runs to 73 residues: Small, acid-soluble spore protein C2 (73 aa).

The protein belongs to the alpha/beta-type SASP family.

In terms of biological role, SASP are bound to spore DNA. They are double-stranded DNA-binding proteins that cause DNA to change to an a-like conformation. They protect the DNA backbone from chemical and enzymatic cleavage and are thus involved in dormant spore's high resistance to UV light. The polypeptide is Small, acid-soluble spore protein C2 (SASP-C2) (Priestia megaterium (Bacillus megaterium)).